The primary structure comprises 555 residues: Dihydroxy-acid dehydratase (555 aa).

Aspartate 78 contacts Mg(2+). Cysteine 119 is a [2Fe-2S] cluster binding site. Mg(2+) is bound by residues aspartate 120 and lysine 121. Lysine 121 is modified (N6-carboxylysine). Cysteine 195 contacts [2Fe-2S] cluster. Glutamate 444 is a binding site for Mg(2+). Serine 470 acts as the Proton acceptor in catalysis.

It belongs to the IlvD/Edd family. As to quaternary structure, homodimer. It depends on [2Fe-2S] cluster as a cofactor. Mg(2+) is required as a cofactor.

The catalysed reaction is (2R)-2,3-dihydroxy-3-methylbutanoate = 3-methyl-2-oxobutanoate + H2O. It catalyses the reaction (2R,3R)-2,3-dihydroxy-3-methylpentanoate = (S)-3-methyl-2-oxopentanoate + H2O. It participates in amino-acid biosynthesis; L-isoleucine biosynthesis; L-isoleucine from 2-oxobutanoate: step 3/4. The protein operates within amino-acid biosynthesis; L-valine biosynthesis; L-valine from pyruvate: step 3/4. Functions in the biosynthesis of branched-chain amino acids. Catalyzes the dehydration of (2R,3R)-2,3-dihydroxy-3-methylpentanoate (2,3-dihydroxy-3-methylvalerate) into 2-oxo-3-methylpentanoate (2-oxo-3-methylvalerate) and of (2R)-2,3-dihydroxy-3-methylbutanoate (2,3-dihydroxyisovalerate) into 2-oxo-3-methylbutanoate (2-oxoisovalerate), the penultimate precursor to L-isoleucine and L-valine, respectively. The sequence is that of Dihydroxy-acid dehydratase from Dehalococcoides mccartyi (strain ATCC BAA-2266 / KCTC 15142 / 195) (Dehalococcoides ethenogenes (strain 195)).